The primary structure comprises 160 residues: MSIQTLIIISIVIFILWLTFTSGSSYDPYHNFMKQKNHIFHNINKWVKKDVSKFLETLLKPFDKQCVGKTRTIESLEKLRTENNVEFKKLLNCGYIHNLFILIGLSVWEDFSKLHTETSLNTFINECLIPISTSPNFVAGNMLYTQTKPGVLKCLNDKNL.

Residues 1–21 traverse the membrane as a helical segment; the sequence is MSIQTLIIISIVIFILWLTFT.

The protein belongs to the IIV-6 203L/325L family.

It localises to the membrane. This is an uncharacterized protein from Invertebrate iridescent virus 6 (IIV-6).